A 158-amino-acid polypeptide reads, in one-letter code: Phosphopantetheine adenylyltransferase (158 aa).

Thr9 serves as a coordination point for substrate. ATP contacts are provided by residues 9–10 (TF) and His17. 3 residues coordinate substrate: Lys41, Leu73, and Arg87. Residues 88-90 (GLR), Glu98, and 123-129 (YAYISSS) each bind ATP.

The protein belongs to the bacterial CoaD family. As to quaternary structure, homohexamer. Mg(2+) is required as a cofactor.

Its subcellular location is the cytoplasm. It catalyses the reaction (R)-4'-phosphopantetheine + ATP + H(+) = 3'-dephospho-CoA + diphosphate. It functions in the pathway cofactor biosynthesis; coenzyme A biosynthesis; CoA from (R)-pantothenate: step 4/5. In terms of biological role, reversibly transfers an adenylyl group from ATP to 4'-phosphopantetheine, yielding dephospho-CoA (dPCoA) and pyrophosphate. This chain is Phosphopantetheine adenylyltransferase, found in Allochromatium vinosum (strain ATCC 17899 / DSM 180 / NBRC 103801 / NCIMB 10441 / D) (Chromatium vinosum).